Reading from the N-terminus, the 266-residue chain is Aquaporin TIP3-2 (266 aa).

2 helical membrane passes run 29–49 (AAISEFIATAIFVFAAEGSVL) and 66–86 (GLVAVALAHALGLAVAVAVAV). An NPA 1 motif is present at residues 94–96 (NPA). Helical transmembrane passes span 109–129 (LVRAVLYWAAQLLGAVAATLL), 153–173 (AVLLEAVMTFGFVYAYYATVV), and 180–200 (LGTIAPLAVGFLLGANVLAGG). Positions 208–210 (NPA) match the NPA 2 motif. The helical transmembrane segment at 228–248 (YWLGPFLGAGLAGLVYEYLLI) threads the bilayer.

This sequence belongs to the MIP/aquaporin (TC 1.A.8) family. TIP (TC 1.A.8.10) subfamily.

Its subcellular location is the vacuole membrane. Its function is as follows. Aquaporins facilitate the transport of water and small neutral solutes across cell membranes. This Zea mays (Maize) protein is Aquaporin TIP3-2 (TIP3-2).